Consider the following 173-residue polypeptide: Transmembrane protein 240 (173 aa).

Transmembrane regions (helical) follow at residues A5–M25 and L90–V110. S169 is subject to Phosphoserine.

This sequence belongs to the TMEM240 family.

Its subcellular location is the synapse. The protein resides in the cell membrane. This is Transmembrane protein 240 (TMEM240) from Homo sapiens (Human).